A 446-amino-acid chain; its full sequence is SPARC-related modular calcium-binding protein 2 (446 aa).

Residues Met-1–Ala-21 form the signal peptide. A Kazal-like domain is found at Gln-34–Asp-86. Disulfide bonds link Cys-40–Cys-71, Cys-44–Cys-64, Cys-53–Cys-84, Cys-90–Cys-113, Cys-124–Cys-131, and Cys-133–Cys-153. Residues Val-87 to Cys-153 enclose the Thyroglobulin type-1 1 domain. The tract at residues Ala-147–Lys-228 is disordered. A compositionally biased stretch (basic and acidic residues) spans Leu-161–Asp-172. N-linked (GlcNAc...) asparagine glycosylation is present at Asn-206. A compositionally biased stretch (polar residues) spans Asn-206–Cys-216. Residues Val-213–Cys-281 form the Thyroglobulin type-1 2 domain. Disulfide bonds link Cys-216/Cys-240, Cys-251/Cys-258, and Cys-260/Cys-281. Residues Asp-217 to Lys-228 show a composition bias toward basic and acidic residues. 2 consecutive EF-hand domains span residues Leu-347–Lys-382 and Lys-384–Asp-419. Ca(2+) is bound by residues Asp-360, Asn-362, Ser-364, Asp-366, Glu-371, Asp-397, Asn-399, Asp-401, Ser-403, and Glu-408. Residue Asn-362 is glycosylated (N-linked (GlcNAc...) asparagine). Residues Ala-416–Gly-446 are disordered.

Binds various proteins from the extracellular matrix.

It is found in the secreted. It localises to the extracellular space. Its subcellular location is the extracellular matrix. The protein resides in the basement membrane. Functionally, promotes matrix assembly and cell adhesiveness. Can stimulate endothelial cell proliferation, migration, as well as angiogenesis. This chain is SPARC-related modular calcium-binding protein 2 (SMOC2), found in Homo sapiens (Human).